A 754-amino-acid chain; its full sequence is Nibrin (754 aa).

The 60-residue stretch at 24–83 (YVVGRKNCAILIENDQSISRNHAVLTANFSVTNLSQTDEIPVLTLKDNSKYGTFVNEEKM) folds into the FHA domain. 2 consecutive BRCT domains span residues 105–181 (KFRI…TEFL) and 224–315 (GKTF…LAVI). Positions 111–328 (EPLVACSSCL…TKNYCDPQGH (218 aa)) are mediates interaction with SP100. Residues 221–402 (IFKGKTFIFL…FRMLSQDAPT (182 aa)) form an interaction with MTOR, MAPKAP1 and RICTOR region. At Ser278 the chain carries Phosphoserine; by ATM. A disordered region spans residues 326 to 346 (QGHPSTGLKTTTPGPSLSQGV). The segment covering 328 to 346 (HPSTGLKTTTPGPSLSQGV) has biased composition (polar residues). Thr337 is subject to Phosphothreonine. Ser343 is modified (phosphoserine; by ATM). The residue at position 347 (Ser347) is a Phosphoserine. Lys388 is subject to N6-lactoyllysine. Disordered stretches follow at residues 396 to 415 (LSQDAPTVKESCKTSSNNNS) and 430 to 478 (QLSP…MSSC). The residue at position 397 (Ser397) is a Phosphoserine. Position 402 is a phosphothreonine (Thr402). 2 stretches are compositionally biased toward polar residues: residues 430–440 (QLSPTKLPSIN) and 447–462 (SQQQQTNSIRNYFQPS). Phosphoserine; by CDK2 is present on Ser432. Lys435 participates in a covalent cross-link: Glycyl lysine isopeptide (Lys-Gly) (interchain with G-Cter in ubiquitin). The Nuclear localization signal motif lies at 461 to 467 (PSTKKRE). Phosphoserine occurs at positions 509 and 518. Glycyl lysine isopeptide (Lys-Gly) (interchain with G-Cter in SUMO2) cross-links involve residues Lys529, Lys571, and Lys582. 2 positions are modified to phosphoserine: Ser615 and Ser673. Residues Lys686, Lys690, and Lys735 each participate in a glycyl lysine isopeptide (Lys-Gly) (interchain with G-Cter in ubiquitin) cross-link. The FxF/Y motif motif lies at 740 to 749 (ADDLFRYNPY).

The protein belongs to the Nibrin family. As to quaternary structure, component of the MRN complex composed of two heterodimers RAD50 and MRE11 associated with a single NBN. The MRN complexes dimerize on DNA to form joined MRN-MRN oligomers required for DNA double-strand break repair. As part of the MRN complex, interacts with MCM9; the interaction recruits the complex to DNA repair sites. Component of the BASC complex, at least composed of BRCA1, MSH2, MSH6, MLH1, ATM, BLM, RAD50, MRE11 and NBN. Interacts with histone H2AX; this requires phosphorylation of H2AX on 'Ser-139' and promotes NBN recruitment to DNA damage sites. Interacts with (phosphorylated) MDC1; promoting NBN recruitment to DNA damage sites. Interacts with (phosphorylated) RAD17; promoting NBN recruitment to DNA damage sites. Interacts (via FxF/Y motif) with ATM. Interacts with HJURP. Interacts with INTS3. Interacts with KPNA2. Interacts with TERF2; interaction is disrupted upon NBN phosphorylation by CDK2. Interacts with (phosphorylated) RBBP8/CtIP; the interaction links the role of the MRN complex in DNA double-strand break sensing to resection. Interacts with SP100; recruits NBN to PML bodies. Interacts with ATF2. Interacts with MTOR, MAPKAP1 isoform 2 and RICTOR; indicative for an association with the mTORC2 complex. Interacts with MRNIP. Interacts with UFL1; promoting UFL1 recruitment to double-strand breaks following DNA damage. Interacts with CYREN (via XLF motif). (Microbial infection) Interacts with herpes simplex virus 1 protein UL12. In terms of processing, phosphorylated by ATM in response of ionizing radiation, and such phosphorylation is responsible intra-S phase checkpoint control and telomere maintenance. Phosphorylated at Ser-432 by CDK2 in S/G2 phases abolishes interaction with TERF2, enabling DCLRE1B/Apollo recruitment to telomeres. Phosphorylation at Ser-432 in response to dysfunctional telomeres promotes non-homologous end joining repair at telomeres, while dephosphorylation by PPP1CA promotes microhomology-mediated end-joining (MMEJ) repair. Ubiquitinated at Lys-435 via 'Lys-6'-linked ubiquitin chains by RNF8, promoting NBN recruitment to DNA double-strand breaks (DSBs). Ubiquitinated at Lys-686 and Lys-689 via 'Lys-63'-linked ubiquitin chains by PELI1: ubiquitination takes place following PELI1 phosphorylation and promotes ATM activation and DNA repair. Ubiquitinated at Lys-735 via 'Lys-63'-linked ubiquitin chains by the SCF(SKP2) complex: ubiquitination takes place following SKP2 phosphorylation and promotes ATM activation and DNA repair. Post-translationally, lactylation at Lys-388 by KAT5 in response to DNA damage promotes recruitment of the MRN complex to DNA damage sites. Delactylated by HDAC3. As to expression, ubiquitous. Expressed at high levels in testis.

It localises to the nucleus. The protein localises to the chromosome. The protein resides in the PML body. It is found in the telomere. In terms of biological role, component of the MRN complex, which plays a central role in double-strand break (DSB) repair, DNA recombination, maintenance of telomere integrity and meiosis. The MRN complex is involved in the repair of DNA double-strand breaks (DSBs) via homologous recombination (HR), an error-free mechanism which primarily occurs during S and G2 phases. The complex (1) mediates the end resection of damaged DNA, which generates proper single-stranded DNA, a key initial steps in HR, and is (2) required for the recruitment of other repair factors and efficient activation of ATM and ATR upon DNA damage. The MRN complex possesses single-strand endonuclease activity and double-strand-specific 3'-5' exonuclease activity, which are provided by MRE11, to initiate end resection, which is required for single-strand invasion and recombination. Within the MRN complex, NBN acts as a protein-protein adapter, which specifically recognizes and binds phosphorylated proteins, promoting their recruitment to DNA damage sites. Recruits MRE11 and RAD50 components of the MRN complex to DSBs in response to DNA damage. Promotes the recruitment of PI3/PI4-kinase family members ATM, ATR, and probably DNA-PKcs to the DNA damage sites, activating their functions. Mediates the recruitment of phosphorylated RBBP8/CtIP to DSBs, leading to cooperation between the MRN complex and RBBP8/CtIP to initiate end resection. RBBP8/CtIP specifically promotes the endonuclease activity of the MRN complex to clear DNA ends containing protein adducts. The MRN complex is also required for the processing of R-loops. NBN also functions in telomere length maintenance via its interaction with TERF2: interaction with TERF2 during G1 phase preventing recruitment of DCLRE1B/Apollo to telomeres. NBN also promotes DNA repair choice at dysfunctional telomeres: NBN phosphorylation by CDK2 promotes non-homologous end joining repair at telomeres, while unphosphorylated NBN promotes microhomology-mediated end-joining (MMEJ) repair. Enhances AKT1 phosphorylation possibly by association with the mTORC2 complex. This is Nibrin from Homo sapiens (Human).